The following is a 205-amino-acid chain: Cytochrome c biogenesis ATP-binding export protein CcmA 2 (205 aa).

In terms of domain architecture, ABC transporter spans 2–205 (LEARDLHCER…LALTGGEAGL (204 aa)). Position 34 to 41 (34 to 41 (GGNGAGKT)) interacts with ATP.

It belongs to the ABC transporter superfamily. CcmA exporter (TC 3.A.1.107) family. As to quaternary structure, the complex is composed of two ATP-binding proteins (CcmA) and two transmembrane proteins (CcmB).

It localises to the cell inner membrane. It carries out the reaction heme b(in) + ATP + H2O = heme b(out) + ADP + phosphate + H(+). In terms of biological role, part of the ABC transporter complex CcmAB involved in the biogenesis of c-type cytochromes; once thought to export heme, this seems not to be the case, but its exact role is uncertain. Responsible for energy coupling to the transport system. This Salmonella paratyphi A (strain ATCC 9150 / SARB42) protein is Cytochrome c biogenesis ATP-binding export protein CcmA 2.